Consider the following 762-residue polypeptide: Serine/threonine-protein kinase PLK4 (762 aa).

Positions 14–268 constitute a Protein kinase domain; it reads YEVQHLLGKG…LEQVLRHPFM (255 aa). ATP is bound by residues 20-28 and K43; that span reads LGKGGFACV. The Proton acceptor role is filled by D139. The Cryptic POLO box 1 (CPB1) domain occupies 383–498; sequence AECISMPPLN…ARFVSLVKSK (116 aa). One can recognise a Cryptic POLO box 2 (CPB2) domain in the interval 499–602; sequence TPKVTYFSGL…GRRPTPEVMP (104 aa). The POLO box domain occupies 657–736; it reads PIKRLNVPGV…LPQVQMKLKS (80 aa).

The protein belongs to the protein kinase superfamily. Ser/Thr protein kinase family. CDC5/Polo subfamily. Homodimer. In terms of processing, ubiquitinated by the SCF(Slimb) ubiquitin ligase complex; leading to its degradation by the proteasome during interphase and regulating centriole number and ensuring the block to centriole reduplication.

It localises to the cytoplasm. Its subcellular location is the cytoskeleton. The protein resides in the microtubule organizing center. It is found in the centrosome. The protein localises to the centriole. It carries out the reaction L-seryl-[protein] + ATP = O-phospho-L-seryl-[protein] + ADP + H(+). The enzyme catalyses L-threonyl-[protein] + ATP = O-phospho-L-threonyl-[protein] + ADP + H(+). Its function is as follows. Serine/threonine-protein kinase that plays a central role in centriole duplication. Able to trigger procentriole formation on the surface of the mother centriole cylinder, using mother centriole as a platform, leading to the recruitment of centriole biogenesis proteins such as sas-6. When overexpressed, it is able to induce centrosome amplification through the simultaneous generation of multiple procentrioles adjoining each parental centriole during S phase. Centrosome amplification following overexpression can initiate tumorigenesis, highlighting the importance of centrosome regulation in cancers. This Drosophila grimshawi (Hawaiian fruit fly) protein is Serine/threonine-protein kinase PLK4 (SAK).